A 260-amino-acid chain; its full sequence is MLVLLPPSEGKAASGRGAPLKTGSLSLPGLTAAREAVLGELVELCAGDEEKAREVLGLSEGLRGEVAKNTELLTAGARPAGEIYTGVLYDALDLASLDAAAKRRAARSLLVFSGLWGAVRMTDRIPSYRCSMGVKLPGLGALGAHWRAPMAEVLPEAAGDGLVLDLRSAAYAAAWKPKGEVAARTATVRVLHAPTRKVVSHFNKATKGRIVRSLLATGTAPEGPAELVEALRDLGYEVEAEAPAKGGRPWSLDVLVHEVH.

Belongs to the UPF0246 family.

This is UPF0246 protein SCO2297 from Streptomyces coelicolor (strain ATCC BAA-471 / A3(2) / M145).